Reading from the N-terminus, the 341-residue chain is Binder of USO1 and GRH1 protein 1 (341 aa).

A disordered region spans residues 1–181 (MSEQESDEVK…AADDLFANDG (181 aa)). An N-acetylserine modification is found at Ser-2. The stretch at 2–41 (SEQESDEVKRMKQLEEARKRVEELKKKKNKKNKGKKNKNS) forms a coiled coil. Residues 7-26 (DEVKRMKQLEEARKRVEELK) show a composition bias toward basic and acidic residues. A compositionally biased stretch (basic residues) spans 27–39 (KKKNKKNKGKKNK). Residues 69-78 (KANSTKSENN) show a composition bias toward polar residues. Residues 79 to 91 (DQNDVDEESEEKE) show a composition bias toward acidic residues. Ser-87 bears the Phosphoserine mark. The segment covering 118 to 132 (GKDDAENTKKEEVQE) has biased composition (basic and acidic residues). A compositionally biased stretch (polar residues) spans 158 to 171 (VQTQEGNEPSNTSE). Ser-170 is subject to Phosphoserine. Positions 188–272 (LTTIKKQKEE…LKLAEAKAAR (85 aa)) form a coiled coil. Thr-292 carries the phosphothreonine modification.

In terms of assembly, interacts with GRH1 (via C-terminus), probably forming a heterooligomer consisting of a GRH1 dimer and a BUG1 dimer.

Its subcellular location is the cytoplasm. The protein localises to the golgi apparatus. The protein resides in the cis-Golgi network membrane. In terms of biological role, involved in ER to Golgi vesicle-mediated transport by either facilitating USO1-dependent and -independent tethering or increasing target accuracy of fusion events of COPII-coated vesicles. This chain is Binder of USO1 and GRH1 protein 1, found in Saccharomyces cerevisiae (strain ATCC 204508 / S288c) (Baker's yeast).